Reading from the N-terminus, the 283-residue chain is MKQYLDLCKRIVDEGEWVNNARTNKKCLTVINADLVYDVGNNQFPLVTTRKSFWKSAIAEILGYLRGYQNAADFRALGTKTWDANANENQAWLDNPNRKGPDDMGLIYGALGRAFPKPDGGHVDLLQQIVDDLSNGIDNRGEILTFYHPGAFDLGCLRPCMYEHHFSLLGDTLYLNSTQRSCDVPLGLNFNMVQVYVLLALMAQITGHKPGKAYHKIVNAHIYEDQLEPMRDVQLAREPFASPKLIINPKIKTLKDIETWVTLDDFSVEDYQHHDAIKYPFAV.

Arginine 22 contributes to the dUMP binding site. Cysteine 160 acts as the Nucleophile in catalysis. DUMP-binding positions include 180–183 (RSCD), asparagine 191, and 221–223 (HIY). Aspartate 183 is a binding site for (6R)-5,10-methylene-5,6,7,8-tetrahydrofolate. Alanine 282 serves as a coordination point for (6R)-5,10-methylene-5,6,7,8-tetrahydrofolate.

Belongs to the thymidylate synthase family. Bacterial-type ThyA subfamily. As to quaternary structure, homodimer.

Its subcellular location is the cytoplasm. The enzyme catalyses dUMP + (6R)-5,10-methylene-5,6,7,8-tetrahydrofolate = 7,8-dihydrofolate + dTMP. It participates in pyrimidine metabolism; dTTP biosynthesis. In terms of biological role, catalyzes the reductive methylation of 2'-deoxyuridine-5'-monophosphate (dUMP) to 2'-deoxythymidine-5'-monophosphate (dTMP) while utilizing 5,10-methylenetetrahydrofolate (mTHF) as the methyl donor and reductant in the reaction, yielding dihydrofolate (DHF) as a by-product. This enzymatic reaction provides an intracellular de novo source of dTMP, an essential precursor for DNA biosynthesis. This is Thymidylate synthase from Shewanella frigidimarina (strain NCIMB 400).